Consider the following 338-residue polypeptide: MARKLSIKLAINEAIDQEMTRDPSVIMLGEDIVGGAGADGEKDAWGGVLGVTKGLYAKHGDRLLDTPLSESAYVGAAIGAAACGMRPIAELMFIDFMGVCFDQIFNQAAKFRYMFGGKAETPVVIRAMVGAGFRAAAQHSQMLTPLFTHIPGLKVVCPSTPYDTKGLLIQAIRDNDPVIFCEHKNLYGLEGEVPEGAYAIPFGEANIVRDGKDVSIVTYGLMVHRALEAAATLAKEGIEAEIVDLRTLSPLDMDTVLESVENTGRLVVVDEASPRCNIATDISAQVAQQAFGALKAGIEMVCPPHTPVPFSPTLEDLYIPSAAQIAAAARKTMKGGKH.

As to quaternary structure, tetramer of 2 alpha and 2 beta subunits.

It participates in ketone degradation; acetoin degradation. Its function is as follows. Catalyzes the 2,6-dichlorophenolindophenol-dependent cleavage of acetoin into acetate and acetaldehyde, in vitro. The beta subunit is probably not the catalytic subunit of the enzyme. This is Acetoin:2,6-dichlorophenolindophenol oxidoreductase subunit beta (acoB) from Cupriavidus necator (strain ATCC 17699 / DSM 428 / KCTC 22496 / NCIMB 10442 / H16 / Stanier 337) (Ralstonia eutropha).